The primary structure comprises 704 residues: Fatty acid oxidation complex subunit alpha (704 aa).

The enoyl-CoA hydratase stretch occupies residues 1–190 (MSEQKAFSLK…KLGVVDACVP (190 aa)). A 3-hydroxyacyl-CoA dehydrogenase region spans residues 308–704 (TAVNKVGVLG…RAGEGRNFYD (397 aa)).

It in the N-terminal section; belongs to the enoyl-CoA hydratase/isomerase family. This sequence in the central section; belongs to the 3-hydroxyacyl-CoA dehydrogenase family. Heterotetramer of two alpha chains (FadJ) and two beta chains (FadI).

It is found in the cytoplasm. It carries out the reaction a (3S)-3-hydroxyacyl-CoA = a (2E)-enoyl-CoA + H2O. It catalyses the reaction a 4-saturated-(3S)-3-hydroxyacyl-CoA = a (3E)-enoyl-CoA + H2O. The catalysed reaction is a (3S)-3-hydroxyacyl-CoA + NAD(+) = a 3-oxoacyl-CoA + NADH + H(+). The enzyme catalyses (3S)-3-hydroxybutanoyl-CoA = (3R)-3-hydroxybutanoyl-CoA. It participates in lipid metabolism; fatty acid beta-oxidation. Functionally, catalyzes the formation of a hydroxyacyl-CoA by addition of water on enoyl-CoA. Also exhibits 3-hydroxyacyl-CoA epimerase and 3-hydroxyacyl-CoA dehydrogenase activities. The chain is Fatty acid oxidation complex subunit alpha from Vibrio campbellii (strain ATCC BAA-1116).